Here is a 258-residue protein sequence, read N- to C-terminus: TLC domain-containing protein 4 A (258 aa).

7 consecutive transmembrane segments (helical) span residues 8–28 (YLIS…YIWI), 49–71 (IEWT…SCYC), 92–112 (FILK…IIYY), 118–138 (WPII…IGLY), 144–164 (LTLL…MKWF), 170–190 (LENH…FIFI), and 217–237 (IIFF…YLVI). Residues 46–245 (SSKIEWTNKI…VIKGILKHLS (200 aa)) form the TLC domain.

The protein belongs to the TLCD4 family.

It localises to the membrane. In Dictyostelium discoideum (Social amoeba), this protein is TLC domain-containing protein 4 A (tlcd4a).